A 358-amino-acid polypeptide reads, in one-letter code: Histidinol-phosphate aminotransferase (358 aa).

The residue at position 218 (lysine 218) is an N6-(pyridoxal phosphate)lysine.

Belongs to the class-II pyridoxal-phosphate-dependent aminotransferase family. Histidinol-phosphate aminotransferase subfamily. In terms of assembly, homodimer. Pyridoxal 5'-phosphate is required as a cofactor.

It catalyses the reaction L-histidinol phosphate + 2-oxoglutarate = 3-(imidazol-4-yl)-2-oxopropyl phosphate + L-glutamate. Its pathway is amino-acid biosynthesis; L-histidine biosynthesis; L-histidine from 5-phospho-alpha-D-ribose 1-diphosphate: step 7/9. The protein is Histidinol-phosphate aminotransferase of Dehalococcoides mccartyi (strain ATCC BAA-2100 / JCM 16839 / KCTC 5957 / BAV1).